A 286-amino-acid polypeptide reads, in one-letter code: Thymidylate synthase (286 aa).

Arg-27 lines the dUMP pocket. A (6R)-5,10-methylene-5,6,7,8-tetrahydrofolate-binding site is contributed by His-57. Position 148–149 (148–149) interacts with dUMP; the sequence is RR. Cys-168 acts as the Nucleophile in catalysis. Residues 188-191, Asn-199, and 229-231 each bind dUMP; these read RSAD and HLY. Asp-191 is a binding site for (6R)-5,10-methylene-5,6,7,8-tetrahydrofolate. Ala-285 serves as a coordination point for (6R)-5,10-methylene-5,6,7,8-tetrahydrofolate.

Belongs to the thymidylate synthase family. Bacterial-type ThyA subfamily. In terms of assembly, homodimer.

It is found in the cytoplasm. It catalyses the reaction dUMP + (6R)-5,10-methylene-5,6,7,8-tetrahydrofolate = 7,8-dihydrofolate + dTMP. It functions in the pathway pyrimidine metabolism; dTTP biosynthesis. Functionally, catalyzes the reductive methylation of 2'-deoxyuridine-5'-monophosphate (dUMP) to 2'-deoxythymidine-5'-monophosphate (dTMP) while utilizing 5,10-methylenetetrahydrofolate (mTHF) as the methyl donor and reductant in the reaction, yielding dihydrofolate (DHF) as a by-product. This enzymatic reaction provides an intracellular de novo source of dTMP, an essential precursor for DNA biosynthesis. The polypeptide is Thymidylate synthase (Psychrobacter sp. (strain PRwf-1)).